The primary structure comprises 64 residues: Prokaryotic ubiquitin-like protein Pup (64 aa).

Over residues 1–10 the composition is skewed to polar residues; the sequence is MNQNGSQIHS. The tract at residues 1–32 is disordered; the sequence is MNQNGSQIHSDGNGHSDDTDTPGVSAGQVSVN. Residues 20 to 58 form an ARC ATPase binding region; sequence DTPGVSAGQVSVNTAGVDDLLDEIDGLLESNAEEFVRSY. Q64 is modified (deamidated glutamine). Q64 participates in a covalent cross-link: Isoglutamyl lysine isopeptide (Gln-Lys) (interchain with K-? in acceptor proteins).

The protein belongs to the prokaryotic ubiquitin-like protein family. Strongly interacts with the proteasome-associated ATPase ARC through a hydrophobic interface; the interacting region of Pup lies in its C-terminal half. There is one Pup binding site per ARC hexamer ring. Is modified by deamidation of its C-terminal glutamine to glutamate by the deamidase Dop, a prerequisite to the subsequent pupylation process.

The protein operates within protein degradation; proteasomal Pup-dependent pathway. Its function is as follows. Protein modifier that is covalently attached to lysine residues of substrate proteins, thereby targeting them for proteasomal degradation. The tagging system is termed pupylation. The polypeptide is Prokaryotic ubiquitin-like protein Pup (Corynebacterium diphtheriae (strain ATCC 700971 / NCTC 13129 / Biotype gravis)).